Reading from the N-terminus, the 290-residue chain is 4-hydroxy-3-methylbut-2-enyl diphosphate reductase (290 aa).

C12 contacts [4Fe-4S] cluster. (2E)-4-hydroxy-3-methylbut-2-enyl diphosphate contacts are provided by H50 and H83. 2 residues coordinate dimethylallyl diphosphate: H50 and H83. 2 residues coordinate isopentenyl diphosphate: H50 and H83. C105 is a [4Fe-4S] cluster binding site. Position 133 (H133) interacts with (2E)-4-hydroxy-3-methylbut-2-enyl diphosphate. H133 contacts dimethylallyl diphosphate. H133 provides a ligand contact to isopentenyl diphosphate. Residue E135 is the Proton donor of the active site. (2E)-4-hydroxy-3-methylbut-2-enyl diphosphate is bound at residue T173. C202 is a binding site for [4Fe-4S] cluster. (2E)-4-hydroxy-3-methylbut-2-enyl diphosphate is bound by residues S230, N232, and S274. Residues S230, N232, and S274 each contribute to the dimethylallyl diphosphate site. Isopentenyl diphosphate is bound by residues S230, N232, and S274.

It belongs to the IspH family. Requires [4Fe-4S] cluster as cofactor.

The catalysed reaction is isopentenyl diphosphate + 2 oxidized [2Fe-2S]-[ferredoxin] + H2O = (2E)-4-hydroxy-3-methylbut-2-enyl diphosphate + 2 reduced [2Fe-2S]-[ferredoxin] + 2 H(+). It carries out the reaction dimethylallyl diphosphate + 2 oxidized [2Fe-2S]-[ferredoxin] + H2O = (2E)-4-hydroxy-3-methylbut-2-enyl diphosphate + 2 reduced [2Fe-2S]-[ferredoxin] + 2 H(+). Its pathway is isoprenoid biosynthesis; dimethylallyl diphosphate biosynthesis; dimethylallyl diphosphate from (2E)-4-hydroxy-3-methylbutenyl diphosphate: step 1/1. It participates in isoprenoid biosynthesis; isopentenyl diphosphate biosynthesis via DXP pathway; isopentenyl diphosphate from 1-deoxy-D-xylulose 5-phosphate: step 6/6. Catalyzes the conversion of 1-hydroxy-2-methyl-2-(E)-butenyl 4-diphosphate (HMBPP) into a mixture of isopentenyl diphosphate (IPP) and dimethylallyl diphosphate (DMAPP). Acts in the terminal step of the DOXP/MEP pathway for isoprenoid precursor biosynthesis. This Nitratidesulfovibrio vulgaris (strain DP4) (Desulfovibrio vulgaris) protein is 4-hydroxy-3-methylbut-2-enyl diphosphate reductase.